The chain runs to 157 residues: Transcription elongation factor GreA (157 aa).

Residues 10–76 (THEGKQKLEQ…TLENMIRNAK (67 aa)) are a coiled coil.

The protein belongs to the GreA/GreB family.

Functionally, necessary for efficient RNA polymerase transcription elongation past template-encoded arresting sites. The arresting sites in DNA have the property of trapping a certain fraction of elongating RNA polymerases that pass through, resulting in locked ternary complexes. Cleavage of the nascent transcript by cleavage factors such as GreA or GreB allows the resumption of elongation from the new 3'terminus. GreA releases sequences of 2 to 3 nucleotides. The polypeptide is Transcription elongation factor GreA (Bacillus velezensis (strain DSM 23117 / BGSC 10A6 / LMG 26770 / FZB42) (Bacillus amyloliquefaciens subsp. plantarum)).